The following is a 287-amino-acid chain: 4-diphosphocytidyl-2-C-methyl-D-erythritol kinase (287 aa).

Lys12 is an active-site residue. 95 to 105 (PAQAGMGGGSS) serves as a coordination point for ATP. Asp137 is a catalytic residue.

Belongs to the GHMP kinase family. IspE subfamily.

The catalysed reaction is 4-CDP-2-C-methyl-D-erythritol + ATP = 4-CDP-2-C-methyl-D-erythritol 2-phosphate + ADP + H(+). It participates in isoprenoid biosynthesis; isopentenyl diphosphate biosynthesis via DXP pathway; isopentenyl diphosphate from 1-deoxy-D-xylulose 5-phosphate: step 3/6. Its function is as follows. Catalyzes the phosphorylation of the position 2 hydroxy group of 4-diphosphocytidyl-2C-methyl-D-erythritol. The polypeptide is 4-diphosphocytidyl-2-C-methyl-D-erythritol kinase (Delftia acidovorans (strain DSM 14801 / SPH-1)).